Consider the following 419-residue polypeptide: Putative competence-damage inducible protein (419 aa).

It belongs to the CinA family.

This chain is Putative competence-damage inducible protein, found in Streptococcus agalactiae serotype III (strain NEM316).